The primary structure comprises 100 residues: ATP-dependent Clp protease adapter protein ClpS (100 aa).

This sequence belongs to the ClpS family. In terms of assembly, binds to the N-terminal domain of the chaperone ClpA.

Involved in the modulation of the specificity of the ClpAP-mediated ATP-dependent protein degradation. The protein is ATP-dependent Clp protease adapter protein ClpS of Corynebacterium glutamicum (strain R).